Reading from the N-terminus, the 262-residue chain is Acyl-[acyl-carrier-protein]--UDP-N-acetylglucosamine O-acyltransferase (262 aa).

The protein belongs to the transferase hexapeptide repeat family. LpxA subfamily. Homotrimer.

Its subcellular location is the cytoplasm. It catalyses the reaction a (3R)-hydroxyacyl-[ACP] + UDP-N-acetyl-alpha-D-glucosamine = a UDP-3-O-[(3R)-3-hydroxyacyl]-N-acetyl-alpha-D-glucosamine + holo-[ACP]. It participates in glycolipid biosynthesis; lipid IV(A) biosynthesis; lipid IV(A) from (3R)-3-hydroxytetradecanoyl-[acyl-carrier-protein] and UDP-N-acetyl-alpha-D-glucosamine: step 1/6. Its function is as follows. Involved in the biosynthesis of lipid A, a phosphorylated glycolipid that anchors the lipopolysaccharide to the outer membrane of the cell. This is Acyl-[acyl-carrier-protein]--UDP-N-acetylglucosamine O-acyltransferase from Burkholderia ambifaria (strain ATCC BAA-244 / DSM 16087 / CCUG 44356 / LMG 19182 / AMMD) (Burkholderia cepacia (strain AMMD)).